A 295-amino-acid chain; its full sequence is MTSLTLPDIAAQKHQHATPLAWVGMCGIALPVHFDGRSVAAMADAGVSLEDGSSRGIHMSRLYLSLERLERQSLTPLAIRQILADFLASHEGLSHAAYLRLTFDHLLKRPALVSPLAGWKSYSITVDAKIENGMFHVELSVRVPYSSTCPCSAALARQLIQQQFQADFSGQAINREAVLEWLGSSHGIVATPHSQRSLAEVNVRLGDRLEVLPVTELIDRIEASLGTAVQTAVKRADEQAFALANGQNLMFCEDAARRLHQALQQMDWAKAFKLRVEHAESLHAHDAVAASQWQW.

Belongs to the GTP cyclohydrolase IV family.

The enzyme catalyses GTP + H2O = 7,8-dihydroneopterin 3'-triphosphate + formate + H(+). It functions in the pathway cofactor biosynthesis; 7,8-dihydroneopterin triphosphate biosynthesis; 7,8-dihydroneopterin triphosphate from GTP: step 1/1. Its function is as follows. Converts GTP to 7,8-dihydroneopterin triphosphate. The chain is GTP cyclohydrolase FolE2 from Pseudomonas putida (strain W619).